The chain runs to 719 residues: Solute carrier family 15 member 2 (719 aa).

Residues 1–43 (MGKMKDKDVDAEKYEKAQRSPKLCGTNYPVSIAFIVVNEFCER) lie on the Cytoplasmic side of the membrane. The chain crosses the membrane as a helical span at residues 44 to 61 (FSYYGMKAVLTLYFMNYL). Residues 62–69 (HWDKNLST) are Extracellular-facing. An N-linked (GlcNAc...) asparagine glycan is attached at N66. A helical transmembrane segment spans residues 70 to 90 (AIYHAFSGLCYFTPLLGALIA). Residues 91–99 (DSWLGKFKT) lie on the Cytoplasmic side of the membrane. The chain crosses the membrane as a helical span at residues 100–120 (IIYLSIVYVIGHVVKSVGAIP). Topologically, residues 121-125 (DVGDS) are extracellular. The helical transmembrane segment at 126-146 (TVHIALSMVGLGLIALGTGGI) threads the bilayer. The Cytoplasmic segment spans residues 147-169 (KPCVAAFGGDQFDEDNIDERRKF). A helical membrane pass occupies residues 170–190 (FSIFYMSINAGSVLSTIITPI). Residues 191 to 201 (LRGDVQCFGGD) are Extracellular-facing. The helical transmembrane segment at 202 to 222 (CYALAFGVPAALMVIALVVFI) threads the bilayer. Over 223 to 280 (SGSGLYKKSPPEGNVLVRVCKCIGFAISNRWTNSKKSPKRSHWLDWAEEKYSKRLIQE) the chain is Cytoplasmic. Residues 281–301 (IKMVCRVLVLYIPLPMFWALF) form a helical membrane-spanning segment. The Extracellular portion of the chain corresponds to 302-334 (DQQGSRWTLQATRMNMDFGGGFIIKPDQMQMLN). Residues 335-355 (ALLILVFIPIFDMGIYPLVGL) form a helical membrane-spanning segment. At 356–367 (CRIKLTPLKKMA) the chain is on the cytoplasmic side. The helical transmembrane segment at 368 to 388 (TGMILAALAFCAATAVEVYVI) threads the bilayer. Residues 389–594 (KTVVEPPPAK…QANNIHIGWQ (206 aa)) are Extracellular-facing. The tract at residues 389 to 594 (KTVVEPPPAK…QANNIHIGWQ (206 aa)) is extracellular domain (ECD). 3 N-linked (GlcNAc...) asparagine glycosylation sites follow: N481, N513, and N532. Residues 595 to 615 (IPQYVFLTAGEVMFSITGLEF) traverse the membrane as a helical segment. The Cytoplasmic portion of the chain corresponds to 616–626 (SYSQAPASMKS). A helical transmembrane segment spans residues 627–647 (VLQAGWLMTVAFGNVIVLIVA). Topologically, residues 648 to 657 (EGAGMEQWVE) are extracellular. The helical transmembrane segment at 658-678 (FLLFAALLVAVSIIFSIMAYF) threads the bilayer. Residues 679 to 719 (YTYVDPDQLDKLFKEDGDGGKVESSKKDELSLGDMPKQTKM) are Cytoplasmic-facing. Residues 695-708 (GDGGKVESSKKDEL) show a composition bias toward basic and acidic residues. Residues 695–719 (GDGGKVESSKKDELSLGDMPKQTKM) are disordered.

It belongs to the major facilitator superfamily. Proton-dependent oligopeptide transporter (POT/PTR) (TC 2.A.17) family. As to expression, expressed in kidney, brain and gut. Also expressed weakly in eye, gill and skeletal muscle.

It is found in the apical cell membrane. Its subcellular location is the cytoplasmic vesicle. The protein resides in the phagosome membrane. It localises to the cell membrane. It catalyses the reaction a dipeptide(out) + 2 H(+)(out) = a dipeptide(in) + 2 H(+)(in). The enzyme catalyses N-acetyl-D-muramoyl-L-alanyl-D-isoglutamine(out) + 3 H(+)(out) = N-acetyl-D-muramoyl-L-alanyl-D-isoglutamine(in) + 3 H(+)(in). The catalysed reaction is glycyl-L-leucine(out) + 2 H(+)(out) = glycyl-L-leucine(in) + 2 H(+)(in). It carries out the reaction glycyl-L-lysine(out) + 2 H(+)(out) = glycyl-L-lysine(in) + 2 H(+)(in). It catalyses the reaction glycyl-L-glutamate(out) + 3 H(+)(out) = glycyl-L-glutamate(in) + 3 H(+)(in). The enzyme catalyses L-alanyl-L-alanine(out) + 2 H(+)(out) = L-alanyl-L-alanine(in) + 2 H(+)(in). The catalysed reaction is an L-amino acid tripeptide(out) + 2 H(+)(out) = an L-amino acid tripeptide(in) + 2 H(+)(in). It carries out the reaction carnosine(out) + 2 H(+)(out) = carnosine(in) + 2 H(+)(in). Functionally, proton-coupled amino-acid transporter that transports oligopeptides of 2 to 4 amino acids with a preference for dipeptides. Transports neutral and anionic dipeptides with a proton to peptide stoichiometry of 2:1 or 3:1. This chain is Solute carrier family 15 member 2, found in Danio rerio (Zebrafish).